The primary structure comprises 133 residues: Profilin-3 (133 aa).

Belongs to the profilin family. Occurs in many kinds of cells as a complex with monomeric actin in a 1:1 ratio.

The protein localises to the cytoplasm. Its subcellular location is the cytoskeleton. Functionally, binds to actin and affects the structure of the cytoskeleton. At high concentrations, profilin prevents the polymerization of actin, whereas it enhances it at low concentrations. By binding to PIP2, it inhibits the formation of IP3 and DG. The polypeptide is Profilin-3 (PRO3) (Nicotiana tabacum (Common tobacco)).